Consider the following 221-residue polypeptide: tRNA (guanine-N(7)-)-methyltransferase (221 aa).

4 residues coordinate S-adenosyl-L-methionine: E51, E76, D103, and D125. D125 is a catalytic residue. Substrate-binding residues include K129 and D161.

It belongs to the class I-like SAM-binding methyltransferase superfamily. TrmB family.

It catalyses the reaction guanosine(46) in tRNA + S-adenosyl-L-methionine = N(7)-methylguanosine(46) in tRNA + S-adenosyl-L-homocysteine. Its pathway is tRNA modification; N(7)-methylguanine-tRNA biosynthesis. Functionally, catalyzes the formation of N(7)-methylguanine at position 46 (m7G46) in tRNA. The polypeptide is tRNA (guanine-N(7)-)-methyltransferase (Wolbachia pipientis wMel).